Here is an 856-residue protein sequence, read N- to C-terminus: DNA mismatch repair protein MutS (856 aa).

Position 611-618 (611-618 (GPNMGGKS)) interacts with ATP.

Belongs to the DNA mismatch repair MutS family.

This protein is involved in the repair of mismatches in DNA. It is possible that it carries out the mismatch recognition step. This protein has a weak ATPase activity. This Histophilus somni (strain 129Pt) (Haemophilus somnus) protein is DNA mismatch repair protein MutS.